Reading from the N-terminus, the 349-residue chain is Core protein VP7 (349 aa).

Residue Asn45 is glycosylated (N-linked (GlcNAc...) asparagine; by host).

This sequence belongs to the orbivirus VP7 family. Homotrimer.

Its subcellular location is the virion. In terms of biological role, major structural core protein; binds to structural protein VP3. Constitutes the surface of the AHSV core. The protein is Core protein VP7 (Segment-7) of African horse sickness virus 6 (AHSV-6).